The following is a 95-amino-acid chain: Osteocalcin 1 (95 aa).

A signal peptide spans 1–21 (MKTLSVLVLCSLAVLCLTSDA). The propeptide occupies 22 to 50 (SFSSQPAVDTPAQEGLFVEQEQASSVVRQ). One can recognise a Gla domain in the interval 45 to 91 (SSVVRQAPKELSLSQLESLREVCELNLACEDMMDTSGIIAAYTTYYG). Ca(2+) is bound by residues Glu-61, Glu-65, and Glu-68. 3 positions are modified to 4-carboxyglutamate: Glu-61, Glu-65, and Glu-68. A disulfide bond links Cys-67 and Cys-73.

This sequence belongs to the osteocalcin/matrix Gla protein family. In terms of processing, gamma-carboxyglutamate residues are formed by vitamin K dependent carboxylation by GGCX. These residues are essential for the binding of calcium.

Its subcellular location is the secreted. Its function is as follows. The carboxylated form is one of the main organic components of the bone matrix, which constitutes 1-2% of the total bone protein. The carboxylated form binds strongly to apatite and calcium. This is Osteocalcin 1 from Solea senegalensis (Senegalese sole).